The chain runs to 404 residues: Eukaryotic initiation factor 4A-III homolog B (404 aa).

Positions Met-1 to Phe-21 are disordered. The short motif at Ser-31 to Gln-59 is the Q motif element. In terms of domain architecture, Helicase ATP-binding spans Val-62–Ile-232. Ala-75–Thr-82 contacts ATP. Positions Asp-180 to Asp-183 match the DEAD box motif. The Helicase C-terminal domain maps to Gly-243–Ile-404.

Belongs to the DEAD box helicase family. DDX48/FAL1 subfamily. Interacts with MAGO1 and Y14B. Expressed in leaves, flowers and seeds.

Its subcellular location is the nucleus. The protein resides in the cytoplasm. The enzyme catalyses ATP + H2O = ADP + phosphate + H(+). Functionally, ATP-dependent RNA helicase. Core component of the splicing-dependent multiprotein exon junction complex (EJC) deposited at splice junctions on mRNAs. The EJC is a dynamic structure consisting of core proteins and several peripheral nuclear and cytoplasmic associated factors that join the complex only transiently either during EJC assembly or during subsequent mRNA metabolism. The EJC marks the position of the exon-exon junction in the mature mRNA for the gene expression machinery and the core components remain bound to spliced mRNAs throughout all stages of mRNA metabolism thereby influencing downstream processes including nuclear mRNA export, subcellular mRNA localization, translation efficiency and nonsense-mediated mRNA decay (NMD). Its RNA-dependent ATPase and RNA-helicase activities are induced by MLN51/CASC3, but abolished in presence of the MAGO-Y14 heterodimer, thereby trapping the ATP-bound EJC core onto spliced mRNA in a stable conformation. The inhibition of ATPase activity by the MAGO-Y14 heterodimer increases the RNA-binding affinity of the EJC. EJC core proteins play essential roles in rice development, growth and reproduction. Regulates the splicing of UDT1 (UNDEVELOPED TAPETUM 1) pre-mRNA transcript. UDT1 is a key regulator in stamen development. This Oryza sativa subsp. japonica (Rice) protein is Eukaryotic initiation factor 4A-III homolog B.